The following is a 31-amino-acid chain: Photosystem II reaction center protein T (31 aa).

A helical transmembrane segment spans residues 3 to 23 (ALVYTFLLVGTLGIIFFSIFF).

It belongs to the PsbT family. PSII is composed of 1 copy each of membrane proteins PsbA, PsbB, PsbC, PsbD, PsbE, PsbF, PsbH, PsbI, PsbJ, PsbK, PsbL, PsbM, PsbT, PsbY, PsbZ, Psb30/Ycf12, at least 3 peripheral proteins of the oxygen-evolving complex and a large number of cofactors. It forms dimeric complexes.

The protein localises to the plastid. Its subcellular location is the chloroplast thylakoid membrane. In terms of biological role, found at the monomer-monomer interface of the photosystem II (PS II) dimer, plays a role in assembly and dimerization of PSII. PSII is a light-driven water plastoquinone oxidoreductase, using light energy to abstract electrons from H(2)O, generating a proton gradient subsequently used for ATP formation. This is Photosystem II reaction center protein T from Bigelowiella natans (Pedinomonas minutissima).